We begin with the raw amino-acid sequence, 614 residues long: Leucine-rich repeat and immunoglobulin-like domain-containing nogo receptor-interacting protein 1 (614 aa).

The signal sequence occupies residues Met1–Gly35. Intrachain disulfides connect Cys36-Cys42 and Cys40-Cys51. Residues Cys36–Thr65 form the LRRNT domain. Residues Cys36 to Thr555 lie on the Extracellular side of the membrane. 11 LRR repeats span residues Glu66–Ser87, His90–Asn111, Asn114–Gly135, Asn138–Asp159, Asn162–Gly183, Ser186–His207, Gly210–Arg231, Asn258–His279, Tyr282–Glu303, Arg306–Gly327, and Tyr330–Ser351. N-linked (GlcNAc...) asparagine glycosylation is present at Asn138. The N-linked (GlcNAc...) asparagine glycan is linked to Asn196. Residues Asn258, Asn268, and Asn287 are each glycosylated (N-linked (GlcNAc...) asparagine). A glycan (N-linked (GlcNAc...) asparagine) is linked at Asn335. The 55-residue stretch at Asn363–Arg417 folds into the LRRCT domain. 3 disulfide bridges follow: Cys367–Cys390, Cys369–Cys415, and Cys440–Cys491. The region spanning Pro405–His507 is the Ig-like C2-type domain. N-linked (GlcNAc...) asparagine glycans are attached at residues Asn486, Asn499, Asn520, and Asn536. Residues Thr556–Trp576 form a helical membrane-spanning segment. The Cytoplasmic segment spans residues Ser577 to Ile614. Ser596 bears the Phosphoserine mark.

Homotetramer. Forms a ternary complex with RTN4R/NGFR and RTN4R/TNFRSF19. Interacts with NGRF, RTN4R and MYT1L. N-glycosylated. Contains predominantly high-mannose glycans.

The protein localises to the cell membrane. Functionally, functional component of the Nogo receptor signaling complex (RTN4R/NGFR) in RhoA activation responsible for some inhibition of axonal regeneration by myelin-associated factors. Is also an important negative regulator of oligodentrocyte differentiation and axonal myelination. Acts in conjunction with RTN4 and RTN4R in regulating neuronal precursor cell motility during cortical development. The sequence is that of Leucine-rich repeat and immunoglobulin-like domain-containing nogo receptor-interacting protein 1 (LINGO1) from Pongo abelii (Sumatran orangutan).